The following is a 205-amino-acid chain: Holliday junction branch migration complex subunit RuvA (205 aa).

Residues methionine 1–histidine 64 are domain I. The interval glutamate 65–threonine 143 is domain II. Residues leucine 144–serine 153 are flexible linker. Residues glycine 154 to lysine 205 form a domain III region.

The protein belongs to the RuvA family. Homotetramer. Forms an RuvA(8)-RuvB(12)-Holliday junction (HJ) complex. HJ DNA is sandwiched between 2 RuvA tetramers; dsDNA enters through RuvA and exits via RuvB. An RuvB hexamer assembles on each DNA strand where it exits the tetramer. Each RuvB hexamer is contacted by two RuvA subunits (via domain III) on 2 adjacent RuvB subunits; this complex drives branch migration. In the full resolvosome a probable DNA-RuvA(4)-RuvB(12)-RuvC(2) complex forms which resolves the HJ.

The protein resides in the cytoplasm. The RuvA-RuvB-RuvC complex processes Holliday junction (HJ) DNA during genetic recombination and DNA repair, while the RuvA-RuvB complex plays an important role in the rescue of blocked DNA replication forks via replication fork reversal (RFR). RuvA specifically binds to HJ cruciform DNA, conferring on it an open structure. The RuvB hexamer acts as an ATP-dependent pump, pulling dsDNA into and through the RuvAB complex. HJ branch migration allows RuvC to scan DNA until it finds its consensus sequence, where it cleaves and resolves the cruciform DNA. This Pseudomonas putida (strain W619) protein is Holliday junction branch migration complex subunit RuvA.